Here is an 87-residue protein sequence, read N- to C-terminus: Translation initiation factor IF-1 (87 aa).

The S1-like domain occupies 16–87; sequence LSKEDVIEME…TKGRISYRHK (72 aa).

It belongs to the IF-1 family. As to quaternary structure, component of the 30S ribosomal translation pre-initiation complex which assembles on the 30S ribosome in the order IF-2 and IF-3, IF-1 and N-formylmethionyl-tRNA(fMet); mRNA recruitment can occur at any time during PIC assembly.

It is found in the cytoplasm. One of the essential components for the initiation of protein synthesis. Stabilizes the binding of IF-2 and IF-3 on the 30S subunit to which N-formylmethionyl-tRNA(fMet) subsequently binds. Helps modulate mRNA selection, yielding the 30S pre-initiation complex (PIC). Upon addition of the 50S ribosomal subunit IF-1, IF-2 and IF-3 are released leaving the mature 70S translation initiation complex. This chain is Translation initiation factor IF-1, found in Magnetococcus marinus (strain ATCC BAA-1437 / JCM 17883 / MC-1).